The following is a 108-amino-acid chain: Putative bolA-like protein K11H12.1 (108 aa).

Residues 89–108 are disordered; it reads SKWDGQKQEDSPTCRGGFGK.

The protein belongs to the BolA/IbaG family.

This chain is Putative bolA-like protein K11H12.1, found in Caenorhabditis elegans.